A 478-amino-acid chain; its full sequence is Aspartate ammonia-lyase (478 aa).

Threonine 109, serine 148, threonine 149, asparagine 150, and threonine 195 together coordinate L-aspartate. The interval 326–335 (GSSIMPGKVN) is SS loop. Serine 327 serves as the catalytic Proton acceptor. Serine 328 and lysine 333 together coordinate L-aspartate.

This sequence belongs to the class-II fumarase/aspartase family. Aspartase subfamily. As to quaternary structure, homotetramer.

It carries out the reaction L-aspartate = fumarate + NH4(+). Catalyzes the reversible conversion of L-aspartate to fumarate and ammonia. This is Aspartate ammonia-lyase from Pseudomonas fluorescens.